We begin with the raw amino-acid sequence, 348 residues long: Protein pof5 (348 aa).

It to yeast YDR306C. As to quaternary structure, interacts with skp1.

The protein resides in the mitochondrion. The protein is Protein pof5 (pof5) of Schizosaccharomyces pombe (strain 972 / ATCC 24843) (Fission yeast).